An 805-amino-acid chain; its full sequence is Sucrose synthase (805 aa).

Positions 275-752 are GT-B glycosyltransferase; sequence MVFNVVILSP…GLQRIEEKYT (478 aa).

It belongs to the glycosyltransferase 1 family. Plant sucrose synthase subfamily.

It carries out the reaction an NDP-alpha-D-glucose + D-fructose = a ribonucleoside 5'-diphosphate + sucrose + H(+). Its function is as follows. Sucrose-cleaving enzyme that provides UDP-glucose and fructose for various metabolic pathways. The sequence is that of Sucrose synthase (SS1) from Vigna radiata var. radiata (Mung bean).